The following is a 454-amino-acid chain: Bifunctional protein GlmU (454 aa).

The interval 1–226 (MALNVVILAA…AIEVEGANNR (226 aa)) is pyrophosphorylase. Residues 8 to 11 (LAAG), Lys-22, Gln-73, 78 to 79 (GT), 100 to 102 (YGD), Gly-137, Glu-151, Asn-166, and Asn-224 each bind UDP-N-acetyl-alpha-D-glucosamine. Asp-102 provides a ligand contact to Mg(2+). Residue Asn-224 participates in Mg(2+) binding. The segment at 227–247 (VQLAQLERAYQAREAEKLMIA) is linker. The interval 248–454 (GANLRDPSRI…GWQRPVKIKE (207 aa)) is N-acetyltransferase. The UDP-N-acetyl-alpha-D-glucosamine site is built by Arg-330 and Lys-348. His-360 acts as the Proton acceptor in catalysis. Tyr-363 and Asn-374 together coordinate UDP-N-acetyl-alpha-D-glucosamine. Residues Ala-377, 383 to 384 (NY), Ser-402, Ala-420, and Arg-437 contribute to the acetyl-CoA site.

It in the N-terminal section; belongs to the N-acetylglucosamine-1-phosphate uridyltransferase family. The protein in the C-terminal section; belongs to the transferase hexapeptide repeat family. Homotrimer. Mg(2+) is required as a cofactor.

It localises to the cytoplasm. The catalysed reaction is alpha-D-glucosamine 1-phosphate + acetyl-CoA = N-acetyl-alpha-D-glucosamine 1-phosphate + CoA + H(+). It carries out the reaction N-acetyl-alpha-D-glucosamine 1-phosphate + UTP + H(+) = UDP-N-acetyl-alpha-D-glucosamine + diphosphate. It participates in nucleotide-sugar biosynthesis; UDP-N-acetyl-alpha-D-glucosamine biosynthesis; N-acetyl-alpha-D-glucosamine 1-phosphate from alpha-D-glucosamine 6-phosphate (route II): step 2/2. It functions in the pathway nucleotide-sugar biosynthesis; UDP-N-acetyl-alpha-D-glucosamine biosynthesis; UDP-N-acetyl-alpha-D-glucosamine from N-acetyl-alpha-D-glucosamine 1-phosphate: step 1/1. Its pathway is bacterial outer membrane biogenesis; LPS lipid A biosynthesis. In terms of biological role, catalyzes the last two sequential reactions in the de novo biosynthetic pathway for UDP-N-acetylglucosamine (UDP-GlcNAc). The C-terminal domain catalyzes the transfer of acetyl group from acetyl coenzyme A to glucosamine-1-phosphate (GlcN-1-P) to produce N-acetylglucosamine-1-phosphate (GlcNAc-1-P), which is converted into UDP-GlcNAc by the transfer of uridine 5-monophosphate (from uridine 5-triphosphate), a reaction catalyzed by the N-terminal domain. This is Bifunctional protein GlmU from Shewanella sp. (strain MR-7).